The chain runs to 358 residues: Aminomethyltransferase (358 aa).

It belongs to the GcvT family. The glycine cleavage system is composed of four proteins: P, T, L and H.

It catalyses the reaction N(6)-[(R)-S(8)-aminomethyldihydrolipoyl]-L-lysyl-[protein] + (6S)-5,6,7,8-tetrahydrofolate = N(6)-[(R)-dihydrolipoyl]-L-lysyl-[protein] + (6R)-5,10-methylene-5,6,7,8-tetrahydrofolate + NH4(+). Functionally, the glycine cleavage system catalyzes the degradation of glycine. The sequence is that of Aminomethyltransferase from Francisella tularensis subsp. tularensis (strain WY96-3418).